The primary structure comprises 168 residues: DNA damage-inducible transcript 3 protein (168 aa).

An interaction with TRIB3 region spans residues 10–18; the sequence is LETVSSWEL. An N-terminal region spans residues 10 to 26; the sequence is LETVSSWELEAWYEDLQ. Phosphoserine; by CK2 occurs at positions 14, 15, 30, and 31. The span at 30 to 43 shows a compositional bias: polar residues; that stretch reads SSDENGGPYSSSLG. The segment at 30–168 is disordered; sequence SSDENGGPYS…DRPHVNLQQV (139 aa). The span at 74-87 shows a compositional bias: low complexity; sequence SSSQSPRSPDSSQS. Residues S78 and S81 each carry the phosphoserine; by MAPK14 modification. The 64-residue stretch at 98–161 folds into the bZIP domain; the sequence is GRTRKRKQSG…EATRPGSDRP (64 aa). Residues 101 to 129 are basic motif; the sequence is RKRKQSGQCPARGTGKQRMKEKEQENERK. Basic and acidic residues predominate over residues 118 to 162; the sequence is RMKEKEQENERKVAQLAEENERLKQEIERLTREVEATRPGSDRPH. Residues 133–147 are leucine-zipper; the sequence is LAEENERLKQEIERL.

It belongs to the bZIP family. As to quaternary structure, heterodimer. Interacts with TCF7L2/TCF4, EP300/P300, HDAC1, HDAC5 and HDAC6. Interacts with TRIB3 which blocks its association with EP300/P300. Interacts with FOXO3, CEBPB and ATF4. Ubiquitinated, leading to its degradation by the proteasome. In terms of processing, phosphorylation at serine residues by MAPK14 enhances its transcriptional activation activity while phosphorylation at serine residues by CK2 inhibits its transcriptional activation activity.

The protein localises to the cytoplasm. It is found in the nucleus. Multifunctional transcription factor in ER stress response. Plays an essential role in the response to a wide variety of cell stresses and induces cell cycle arrest and apoptosis in response to ER stress. Plays a dual role both as an inhibitor of CCAAT/enhancer-binding protein (C/EBP) function and as an activator of other genes. Acts as a dominant-negative regulator of C/EBP-induced transcription: dimerizes with members of the C/EBP family, impairs their association with C/EBP binding sites in the promoter regions, and inhibits the expression of C/EBP regulated genes. Positively regulates the transcription of TRIB3, IL6, IL8, IL23, TNFRSF10B/DR5, PPP1R15A/GADD34, BBC3/PUMA, BCL2L11/BIM and ERO1L. Negatively regulates; expression of BCL2 and MYOD1, ATF4-dependent transcriptional activation of asparagine synthetase (ASNS), CEBPA-dependent transcriptional activation of hepcidin (HAMP) and CEBPB-mediated expression of peroxisome proliferator-activated receptor gamma (PPARG). Inhibits the canonical Wnt signaling pathway by binding to TCF7L2/TCF4, impairing its DNA-binding properties and repressing its transcriptional activity. Plays a regulatory role in the inflammatory response through the induction of caspase-11 (CASP4/CASP11) which induces the activation of caspase-1 (CASP1) and both these caspases increase the activation of pro-IL1B to mature IL1B which is involved in the inflammatory response. In Cricetulus griseus (Chinese hamster), this protein is DNA damage-inducible transcript 3 protein (DDIT3).